Here is a 669-residue protein sequence, read N- to C-terminus: Dymeclin (669 aa).

Gly-2 is lipidated: N-myristoyl glycine.

Belongs to the dymeclin family. In terms of assembly, interacts with GOLM1 and PPIB. Myristoylated in vitro; myristoylation is not essential for protein targeting to Golgi compartment. As to expression, expressed in most embryo-fetal and adult tissues. Abundant in primary chondrocytes, osteoblasts, cerebellum, kidney, lung, stomach, heart, pancreas and fetal brain. Very low or no expression in the spleen, thymus, esophagus, bladder and thyroid gland.

The protein localises to the cytoplasm. It is found in the golgi apparatus. Its subcellular location is the membrane. In terms of biological role, necessary for correct organization of Golgi apparatus. Involved in bone development. The chain is Dymeclin (DYM) from Homo sapiens (Human).